Here is a 358-residue protein sequence, read N- to C-terminus: Peptide chain release factor 1 (358 aa).

Q233 bears the N5-methylglutamine mark.

The protein belongs to the prokaryotic/mitochondrial release factor family. Methylated by PrmC. Methylation increases the termination efficiency of RF1.

It is found in the cytoplasm. Its function is as follows. Peptide chain release factor 1 directs the termination of translation in response to the peptide chain termination codons UAG and UAA. The sequence is that of Peptide chain release factor 1 from Lachnoclostridium phytofermentans (strain ATCC 700394 / DSM 18823 / ISDg) (Clostridium phytofermentans).